A 250-amino-acid polypeptide reads, in one-letter code: GTP cyclohydrolase 1 type 2 homolog (250 aa).

A divalent metal cation is bound by residues histidine 63, histidine 64, aspartate 100, histidine 218, and glutamate 222.

It belongs to the GTP cyclohydrolase I type 2/NIF3 family. Homohexamer.

The polypeptide is GTP cyclohydrolase 1 type 2 homolog (Pyrococcus abyssi (strain GE5 / Orsay)).